The sequence spans 501 residues: Solute carrier family 2, facilitated glucose transporter member 5 (501 aa).

Met1 is subject to N-acetylmethionine. Residues 1 to 18 (MEQQDQSMKEGRLTLVLA) are Cytoplasmic-facing. Residues 19 to 39 (LATLIAAFGSSFQYGYNVAAV) traverse the membrane as a helical segment. Position 32 (Tyr32) interacts with D-fructose. Residues 40–68 (NSPALLMQQFYNETYYGRTGEFMEDFPLT) are Extracellular-facing. Asn51 is a glycosylation site (N-linked (GlcNAc...) asparagine). Residues 69–91 (LLWSVTVSMFPFGGFIGSLLVGP) traverse the membrane as a helical segment. At 92-98 (LVNKFGR) the chain is on the cytoplasmic side. The chain crosses the membrane as a helical span at residues 99–119 (KGALLFNNIFSIVPAILMGCS). Topologically, residues 120 to 126 (RVATSFE) are extracellular. Residues 127 to 149 (LIIISRLLVGICAGVSSNVVPMY) traverse the membrane as a helical segment. The Cytoplasmic portion of the chain corresponds to 150-161 (LGELAPKNLRGA). The helical transmembrane segment at 162 to 182 (LGVVPQLFITVGILVAQIFGL) threads the bilayer. Position 167 (Gln167) interacts with D-fructose. Residues 183-192 (RNLLANVDGW) are Extracellular-facing. Residues 193–213 (PILLGLTGVPAALQLLLLPFF) form a helical membrane-spanning segment. At 214-277 (PESPRYLLIQ…LFRMRSLRWQ (64 aa)) the chain is on the cytoplasmic side. Residues 278–298 (LLSIIVLMGGQQLSGVNAIYY) traverse the membrane as a helical segment. D-fructose-binding positions include Gln288 and 296 to 298 (IYY). Residues 299 to 313 (YADQIYLSAGVPEEH) are Extracellular-facing. Residues 314-334 (VQYVTAGTGAVNVVMTFCAVF) form a helical membrane-spanning segment. Topologically, residues 335-342 (VVELLGRR) are cytoplasmic. Residues 343-363 (LLLLLGFSICLIACCVLTAAL) form a helical membrane-spanning segment. At 364 to 371 (ALQDTVSW) the chain is on the extracellular side. A helical membrane pass occupies residues 372 to 394 (MPYISIVCVISYVIGHALGPSPI). His387 provides a ligand contact to D-fructose. The Cytoplasmic segment spans residues 395-412 (PALLITEIFLQSSRPSAF). Residues 413–433 (MVGGSVHWLSNFTVGLIFPFI) traverse the membrane as a helical segment. A D-fructose-binding site is contributed by 419–420 (HW). Topologically, residues 434 to 439 (QEGLGP) are extracellular. Residues 440 to 460 (YSFIVFAVICLLTTIYIFLIV) traverse the membrane as a helical segment. Over 461–501 (PETKAKTFIEINQIFTKMNKVSEVYPEKEELKELPPVTSEQ) the chain is Cytoplasmic.

Detected in skeletal muscle, and in jejunum brush border membrane and basolateral membrane (at protein level). Expressed in small intestine, and at much lower levels in kidney, skeletal muscle, and adipose tissue.

The protein localises to the apical cell membrane. It localises to the cell membrane. It is found in the sarcolemma. The catalysed reaction is D-fructose(out) = D-fructose(in). The uptake of 2-deoxyglucose is inhibited by cytochalasin B. Fructose transport is inhibited by the flavonoids epigallocatechin gallate and apigenin but not quercetin. Functions as a fructose transporter that has only low activity with other monosaccharides. Can mediate the uptake of 2-deoxyglucose, but with low efficiency. Essential for fructose uptake in the small intestine. Plays a role in the regulation of salt uptake and blood pressure in response to dietary fructose. Required for the development of high blood pressure in response to high dietary fructose intake. The polypeptide is Solute carrier family 2, facilitated glucose transporter member 5 (Homo sapiens (Human)).